Here is a 309-residue protein sequence, read N- to C-terminus: Ribose-phosphate pyrophosphokinase (309 aa).

Residues 37-39 (DGE) and 96-97 (RQ) contribute to the ATP site. Mg(2+) contacts are provided by His130 and Asp169. Lys192 is a catalytic residue. D-ribose 5-phosphate is bound by residues Arg194, Asp218, and 222–226 (DTAGT).

This sequence belongs to the ribose-phosphate pyrophosphokinase family. Class I subfamily. In terms of assembly, homohexamer. Mg(2+) serves as cofactor.

It localises to the cytoplasm. It carries out the reaction D-ribose 5-phosphate + ATP = 5-phospho-alpha-D-ribose 1-diphosphate + AMP + H(+). Its pathway is metabolic intermediate biosynthesis; 5-phospho-alpha-D-ribose 1-diphosphate biosynthesis; 5-phospho-alpha-D-ribose 1-diphosphate from D-ribose 5-phosphate (route I): step 1/1. Its function is as follows. Involved in the biosynthesis of the central metabolite phospho-alpha-D-ribosyl-1-pyrophosphate (PRPP) via the transfer of pyrophosphoryl group from ATP to 1-hydroxyl of ribose-5-phosphate (Rib-5-P). This Helicobacter hepaticus (strain ATCC 51449 / 3B1) protein is Ribose-phosphate pyrophosphokinase.